We begin with the raw amino-acid sequence, 136 residues long: Large ribosomal subunit protein uL16 (136 aa).

This sequence belongs to the universal ribosomal protein uL16 family. As to quaternary structure, part of the 50S ribosomal subunit.

Functionally, binds 23S rRNA and is also seen to make contacts with the A and possibly P site tRNAs. The protein is Large ribosomal subunit protein uL16 of Aliivibrio fischeri (strain ATCC 700601 / ES114) (Vibrio fischeri).